Reading from the N-terminus, the 615-residue chain is NADH-quinone oxidoreductase subunit L (615 aa).

The next 15 helical transmembrane spans lie at 1–21 (MNII…LSLI), 32–52 (IIGI…ITGF), 79–99 (LILD…GLLI), 113–133 (YSRF…LVLA), 136–156 (FLFM…LIGF), 168–188 (LKAF…MFLI), 247–267 (TPVS…YLIA), 279–299 (ILYL…FSAL), 327–347 (AWTA…LLFL), 372–392 (CPLL…FPLI), 410–430 (GYFN…IYTF), 457–477 (LLIL…LPLF), 491–511 (FLYE…AYHI), 536–556 (LNGW…YLFI), and 594–614 (YIST…CSFL).

It belongs to the complex I subunit 5 family. As to quaternary structure, composed of 13 different subunits. Subunits NuoA, H, J, K, L, M, N constitute the membrane sector of the complex.

Its subcellular location is the cell membrane. It carries out the reaction a quinone + NADH + 5 H(+)(in) = a quinol + NAD(+) + 4 H(+)(out). NDH-1 shuttles electrons from NADH, via FMN and iron-sulfur (Fe-S) centers, to quinones in the respiratory chain. Couples the redox reaction to proton translocation (for every two electrons transferred, four hydrogen ions are translocated across the cytoplasmic membrane), and thus conserves the redox energy in a proton gradient. This is NADH-quinone oxidoreductase subunit L (nuoL) from Buchnera aphidicola subsp. Schizaphis graminum (strain Sg).